The following is a 107-amino-acid chain: Urease subunit beta (107 aa).

It belongs to the urease beta subunit family. In terms of assembly, heterotrimer of UreA (gamma), UreB (beta) and UreC (alpha) subunits. Three heterotrimers associate to form the active enzyme.

Its subcellular location is the cytoplasm. The enzyme catalyses urea + 2 H2O + H(+) = hydrogencarbonate + 2 NH4(+). The protein operates within nitrogen metabolism; urea degradation; CO(2) and NH(3) from urea (urease route): step 1/1. The protein is Urease subunit beta of Teredinibacter turnerae (strain ATCC 39867 / T7901).